A 166-amino-acid chain; its full sequence is MDMTNAQRLILSNQYYLMSQLTPENEAKYRRLQTIVERGYGLQMRELDKDFGCLPEDACRNIIDYMEMHHALQESYKMLDDASQSQVEPRRLQFLGFDAATESQQVHYVRFLTEEEGLYPQFDKSEHQFNSQVQMQDKYQRMLQTWRNCPRQYHLSSSEITQILSA.

It belongs to the UPF0304 family.

The protein is UPF0304 protein PBPRA2768 of Photobacterium profundum (strain SS9).